The sequence spans 249 residues: MESCTRSSLQQLVAADSKSSNFCFRNLSQSSNNNVSYASSSNRNFVPQNVLNNEYQSFQHSSTSQPSVLRQGKNAFLKPSQLSFNMNSSEISNTHWARDFNILTSNFASSSVTSAPTQSSHISNFTNSQKYFANDLPNSLTDQPLAQPSASQRSTWLPCSAAVSTSSPSSDPFFDSYLEQAFEKAERLANEQQKISKVEKTFGTLDSIGTEQDDCFDPDYSNLPLFPQENASPPLFRKASCNSGFTTKC.

It localises to the cytoplasm. The protein localises to the nucleus. This is an uncharacterized protein from Schizosaccharomyces pombe (strain 972 / ATCC 24843) (Fission yeast).